The sequence spans 85 residues: Large ribosomal subunit protein bL27 (85 aa).

The interval 1-21 (MAHKKAGGSTRNGRDSESKRL) is disordered.

The protein belongs to the bacterial ribosomal protein bL27 family.

In Ectopseudomonas mendocina (strain ymp) (Pseudomonas mendocina), this protein is Large ribosomal subunit protein bL27.